Consider the following 237-residue polypeptide: Orotidine 5'-phosphate decarboxylase (237 aa).

Substrate-binding positions include aspartate 11, lysine 34, 61–70, threonine 124, arginine 186, glutamine 195, glycine 215, and arginine 216; that span reads DLKLHDIPNT. Lysine 63 serves as the catalytic Proton donor.

This sequence belongs to the OMP decarboxylase family. Type 1 subfamily. In terms of assembly, homodimer.

The catalysed reaction is orotidine 5'-phosphate + H(+) = UMP + CO2. It participates in pyrimidine metabolism; UMP biosynthesis via de novo pathway; UMP from orotate: step 2/2. Its function is as follows. Catalyzes the decarboxylation of orotidine 5'-monophosphate (OMP) to uridine 5'-monophosphate (UMP). In Lactococcus lactis subsp. cremoris (strain SK11), this protein is Orotidine 5'-phosphate decarboxylase.